A 372-amino-acid polypeptide reads, in one-letter code: MFAESPIKRRKSTRINVGNVPIGDGAPIAVQSMTNTRTTDVAATVDQINRIVAVGGEIVRVSVPTMEAAEAFKEIKKQVSVPLVADIHFDYRIALKVAEYGVDCLRINPGNIGNMERVRSVVDCAKDKNIPIRIGVNGGSLEKDLQEKYGEPTPEALVESAMRHVDILDKLNFDQFKVSVKASDVFLAVGAYRLLAQKIDQPLHLGITEAGGQRAGAVKSAVGLGMLLAEGIGDTVRVSLAADPVEEIKVGFDILKSLRIRSRGINFIACPSCSRQEFDVIGTVNALEQRLEDILTPMDVSIIGCVVNGPGEAEVSDLGLTGARNMSGLYEDGKRVKERLPNDDLVDKLEAKIRAKAARLSEQNKIQVSVKD.

Positions 270, 273, 305, and 312 each coordinate [4Fe-4S] cluster.

The protein belongs to the IspG family. Requires [4Fe-4S] cluster as cofactor.

The enzyme catalyses (2E)-4-hydroxy-3-methylbut-2-enyl diphosphate + oxidized [flavodoxin] + H2O + 2 H(+) = 2-C-methyl-D-erythritol 2,4-cyclic diphosphate + reduced [flavodoxin]. It participates in isoprenoid biosynthesis; isopentenyl diphosphate biosynthesis via DXP pathway; isopentenyl diphosphate from 1-deoxy-D-xylulose 5-phosphate: step 5/6. Converts 2C-methyl-D-erythritol 2,4-cyclodiphosphate (ME-2,4cPP) into 1-hydroxy-2-methyl-2-(E)-butenyl 4-diphosphate. This chain is 4-hydroxy-3-methylbut-2-en-1-yl diphosphate synthase (flavodoxin), found in Alteromonas mediterranea (strain DSM 17117 / CIP 110805 / LMG 28347 / Deep ecotype).